The following is a 470-amino-acid chain: Acetyl-CoA decarbonylase/synthase complex subunit beta 2 (470 aa).

Residues C190, C193, C279, and C281 each coordinate [Ni-Fe-S] cluster.

The protein belongs to the CdhC family. In terms of assembly, monomer. The ACDS complex is made up of alpha, epsilon, beta, gamma and delta chains with a probable stoichiometry of (alpha(2)epsilon(2))(4)-beta(8)-(gamma(1)delta(1))(8) (Potential). It depends on [Ni-Fe-S] cluster as a cofactor.

The catalysed reaction is Co(I)-[corrinoid Fe-S protein] + acetyl-CoA + H(+) = methyl-Co(III)-[corrinoid Fe-S protein] + CO + CoA. It participates in one-carbon metabolism; methanogenesis from acetate. Its function is as follows. Part of a complex that catalyzes the reversible cleavage of acetyl-CoA, allowing growth on acetate as sole source of carbon and energy. The alpha-epsilon complex generates CO from CO(2), while the beta subunit (this protein) combines the CO with CoA and a methyl group to form acetyl-CoA. The methyl group, which is incorporated into acetyl-CoA, is transferred to the beta subunit by a corrinoid iron-sulfur protein (the gamma-delta complex). This is Acetyl-CoA decarbonylase/synthase complex subunit beta 2 (cdhC2) from Methanosarcina mazei (strain ATCC BAA-159 / DSM 3647 / Goe1 / Go1 / JCM 11833 / OCM 88) (Methanosarcina frisia).